The chain runs to 396 residues: F-box protein pof13 (396 aa).

Residues 40–89 (KNSNLFLLNRDIWSLIINYLDAFDILRLMHSSRQFYYWLRKSAVDECCFN) form the F-box domain.

In terms of assembly, part of a SCF (SKP1-cullin-F-box) protein ligase complex. Interacts with skp1.

The protein localises to the cytoplasm. Its pathway is protein modification; protein ubiquitination. In Schizosaccharomyces pombe (strain 972 / ATCC 24843) (Fission yeast), this protein is F-box protein pof13 (pof13).